Reading from the N-terminus, the 292-residue chain is Acetyl-coenzyme A carboxylase carboxyl transferase subunit beta (292 aa).

The region spanning 36 to 292 (MWSKCEKCAK…LLRMHEVDYE (257 aa)) is the CoA carboxyltransferase N-terminal domain. Zn(2+) contacts are provided by cysteine 40, cysteine 43, cysteine 59, and cysteine 62. A C4-type zinc finger spans residues 40–62 (CEKCAKILYTEDLRENFNVCPNC).

The protein belongs to the AccD/PCCB family. In terms of assembly, acetyl-CoA carboxylase is a heterohexamer composed of biotin carboxyl carrier protein (AccB), biotin carboxylase (AccC) and two subunits each of ACCase subunit alpha (AccA) and ACCase subunit beta (AccD). Requires Zn(2+) as cofactor.

It is found in the cytoplasm. The enzyme catalyses N(6)-carboxybiotinyl-L-lysyl-[protein] + acetyl-CoA = N(6)-biotinyl-L-lysyl-[protein] + malonyl-CoA. It functions in the pathway lipid metabolism; malonyl-CoA biosynthesis; malonyl-CoA from acetyl-CoA: step 1/1. Functionally, component of the acetyl coenzyme A carboxylase (ACC) complex. Biotin carboxylase (BC) catalyzes the carboxylation of biotin on its carrier protein (BCCP) and then the CO(2) group is transferred by the transcarboxylase to acetyl-CoA to form malonyl-CoA. The chain is Acetyl-coenzyme A carboxylase carboxyl transferase subunit beta from Clostridium perfringens (strain 13 / Type A).